Consider the following 118-residue polypeptide: Small ribosomal subunit protein uS17 (118 aa).

It belongs to the universal ribosomal protein uS17 family. As to quaternary structure, part of the 30S ribosomal subunit.

In terms of biological role, one of the primary rRNA binding proteins, it binds specifically to the 5'-end of 16S ribosomal RNA. This chain is Small ribosomal subunit protein uS17, found in Methanopyrus kandleri (strain AV19 / DSM 6324 / JCM 9639 / NBRC 100938).